Consider the following 174-residue polypeptide: Neuromedin-U (174 aa).

Positions 1–37 are cleaved as a signal peptide; the sequence is MSRAANRRPGLSAGQLAAATASPLLSLLLLLACCADA. A propeptide spanning residues 38-105 is cleaved from the precursor; that stretch reads CRGTPISPQR…EQTEKDNAKR (68 aa). Met-141 carries the post-translational modification Methionine sulfoxide; partial. Asn-166 bears the Asparagine amide mark. Residues 170–174 constitute a propeptide that is removed on maturation; that stretch reads STSFI.

Belongs to the NmU family. In terms of tissue distribution, expressed throughout the gastrointestinal tract with highest levels in the duodenum and jejunum. Low levels in spinal cord, hypothalamus, and stomach. Neuromedin-U-23: Expressed in the small intestine and the pituitary gland (at protein level). Neuromedin precursor-related peptides: Expressed in pituitary gland and small intestine (at protein level).

It is found in the secreted. Functionally, ligand for receptors NMUR1 and NMUR2. Receptor-binding is very tight if not irreversible and triggers an increase in the cytosolic Ca(2+) concentration. Stimulates muscle contractions of specific regions of the gastrointestinal tract. In rat, NMU stimulates contractions of stomach circular muscle. In terms of biological role, does not function as a ligand for either NMUR1 or NMUR2. Indirectly induces prolactin release although its potency is much lower than that of neuromedin precursor-related peptide 36. Its function is as follows. Does not function as a ligand for either NMUR1 or NMUR2. Indirectly induces prolactin release from lactotroph cells in the pituitary gland, probably via the hypothalamic dopaminergic system. This chain is Neuromedin-U (Nmu), found in Rattus norvegicus (Rat).